The sequence spans 506 residues: Glutamate--tRNA ligase (506 aa).

Residues 23 to 33 (PSPTGTPHVGL) carry the 'HIGH' region motif. Residues 267–271 (KLSKR) carry the 'KMSKS' region motif. Residue K270 participates in ATP binding.

This sequence belongs to the class-I aminoacyl-tRNA synthetase family. Glutamate--tRNA ligase type 1 subfamily. Monomer.

The protein resides in the cytoplasm. It carries out the reaction tRNA(Glu) + L-glutamate + ATP = L-glutamyl-tRNA(Glu) + AMP + diphosphate. Its function is as follows. Catalyzes the attachment of glutamate to tRNA(Glu) in a two-step reaction: glutamate is first activated by ATP to form Glu-AMP and then transferred to the acceptor end of tRNA(Glu). The protein is Glutamate--tRNA ligase of Clavibacter sepedonicus (Clavibacter michiganensis subsp. sepedonicus).